The following is a 1218-amino-acid chain: Thrombospondin type 1 domain-containing protein (1218 aa).

Disordered regions lie at residues 82 to 101 (SAGFPRSASSSASSAPPCSS), 189 to 240 (SLEE…SRTR), 298 to 383 (HTAN…VNGL), and 445 to 471 (GGKSRRSEWRRKRTGMMASEARESHRG). Residues 201-210 (GYEEERERRS) are compositionally biased toward basic and acidic residues. Residues 315 to 375 (SSRFTSKASS…SSPLSSSPDS (61 aa)) show a composition bias toward low complexity. The region spanning 638-704 (SCITGPWSEW…RRKCNLGACP (67 aa)) is the TSP type-1 domain. The helical transmembrane segment at 886–906 (GVSHLWISLCAGAVAAVVFLV) threads the bilayer. The interval 1129–1153 (RRRARRGRREGDSGEGGDCGEARKA) is disordered.

As to quaternary structure, component of a complex, at least composed of cysteine repeat modular protein A (CRMPa), cysteine repeat modular protein B (CRMPb), micronemal protein 15 (MIC15) and thrombospondin type 1 domain-containing protein (TSP1).

Its subcellular location is the membrane. Required for rhoptry secretion. Plays a role in host cell invasion. This chain is Thrombospondin type 1 domain-containing protein, found in Toxoplasma gondii.